A 250-amino-acid polypeptide reads, in one-letter code: 5-oxoprolinase subunit A (250 aa).

This sequence belongs to the LamB/PxpA family. In terms of assembly, forms a complex composed of PxpA, PxpB and PxpC.

The catalysed reaction is 5-oxo-L-proline + ATP + 2 H2O = L-glutamate + ADP + phosphate + H(+). In terms of biological role, catalyzes the cleavage of 5-oxoproline to form L-glutamate coupled to the hydrolysis of ATP to ADP and inorganic phosphate. The protein is 5-oxoprolinase subunit A of Staphylococcus haemolyticus (strain JCSC1435).